The chain runs to 113 residues: Gamma-glutamylcyclotransferase family protein YtfP (113 aa).

Belongs to the gamma-glutamylcyclotransferase family.

The protein is Gamma-glutamylcyclotransferase family protein YtfP (ytfP) of Escherichia coli O157:H7.